Consider the following 120-residue polypeptide: Synaptobrevin (120 aa).

Residues 1 to 38 (MSAPPSGPAPDAQGGAPGQPTGPPGAPPNTTSNRRLQQ) form a disordered region. Topologically, residues 1–98 (MSAPPSGPAP…KRKYWWKNCK (98 aa)) are cytoplasmic. Residues 29–38 (NTTSNRRLQQ) show a composition bias toward polar residues. The 61-residue stretch at 35–95 (RLQQTQAQVE…AKLKRKYWWK (61 aa)) folds into the v-SNARE coiled-coil homology domain. Residues 99 to 118 (MMIMLGGIGAIIVIVIIIYF) traverse the membrane as a helical; Anchor for type IV membrane protein segment. Over 119–120 (FT) the chain is Vesicular.

It belongs to the synaptobrevin family. As to expression, nervous system specific.

The protein localises to the cytoplasmic vesicle. It is found in the secretory vesicle. Its subcellular location is the synaptic vesicle membrane. It localises to the synapse. The protein resides in the synaptosome. This protein may play a role in packaging, transport or release of neurotransmitters. This Tetronarce californica (Pacific electric ray) protein is Synaptobrevin.